A 66-amino-acid chain; its full sequence is ATP synthase F(0) complex subunit 8 (66 aa).

Residues 8 to 24 form a helical membrane-spanning segment; that stretch reads TWLTMILSMFLVLFIIF. Lysine 54 carries the N6-acetyllysine; alternate modification. The residue at position 54 (lysine 54) is an N6-succinyllysine; alternate. N6-acetyllysine is present on lysine 57.

This sequence belongs to the ATPase protein 8 family. Component of the ATP synthase complex composed at least of ATP5F1A/subunit alpha, ATP5F1B/subunit beta, ATP5MC1/subunit c (homooctomer), MT-ATP6/subunit a, MT-ATP8/subunit 8, ATP5ME/subunit e, ATP5MF/subunit f, ATP5MG/subunit g, ATP5MK/subunit k, ATP5MJ/subunit j, ATP5F1C/subunit gamma, ATP5F1D/subunit delta, ATP5F1E/subunit epsilon, ATP5PF/subunit F6, ATP5PB/subunit b, ATP5PD/subunit d, ATP5PO/subunit OSCP. ATP synthase complex consists of a soluble F(1) head domain (subunits alpha(3) and beta(3)) - the catalytic core - and a membrane F(0) domain - the membrane proton channel (subunits c, a, 8, e, f, g, k and j). These two domains are linked by a central stalk (subunits gamma, delta, and epsilon) rotating inside the F1 region and a stationary peripheral stalk (subunits F6, b, d, and OSCP). Interacts with PRICKLE3.

The protein localises to the mitochondrion membrane. In terms of biological role, subunit 8, of the mitochondrial membrane ATP synthase complex (F(1)F(0) ATP synthase or Complex V) that produces ATP from ADP in the presence of a proton gradient across the membrane which is generated by electron transport complexes of the respiratory chain. ATP synthase complex consist of a soluble F(1) head domain - the catalytic core - and a membrane F(1) domain - the membrane proton channel. These two domains are linked by a central stalk rotating inside the F(1) region and a stationary peripheral stalk. During catalysis, ATP synthesis in the catalytic domain of F(1) is coupled via a rotary mechanism of the central stalk subunits to proton translocation. In vivo, can only synthesize ATP although its ATP hydrolase activity can be activated artificially in vitro. Part of the complex F(0) domain. This Ovis aries (Sheep) protein is ATP synthase F(0) complex subunit 8.